We begin with the raw amino-acid sequence, 69 residues long: Putative membrane protein insertion efficiency factor (69 aa).

This sequence belongs to the UPF0161 family.

The protein localises to the cell inner membrane. Functionally, could be involved in insertion of integral membrane proteins into the membrane. This chain is Putative membrane protein insertion efficiency factor, found in Azoarcus sp. (strain BH72).